A 508-amino-acid chain; its full sequence is Adenosine deaminase (508 aa).

The signal sequence occupies residues Met1–Ala18.

This sequence belongs to the metallo-dependent hydrolases superfamily. Adenosine and AMP deaminases family. ADGF subfamily. Requires Zn(2+) as cofactor. In terms of tissue distribution, salivary gland (at protein level).

It is found in the secreted. The catalysed reaction is adenosine + H2O + H(+) = inosine + NH4(+). Functionally, catalyzes the deamination of adenosine to inosine. This chain is Adenosine deaminase, found in Lutzomyia longipalpis (Sand fly).